Consider the following 196-residue polypeptide: Lipoprotein signal peptidase (196 aa).

Helical transmembrane passes span 75–95 (IVFLITNTIIVCYLYYLMMSS) and 97–117 (TIGGFAGYSFVIGGAIGNLID). Residues aspartate 126 and aspartate 144 contribute to the active site. The chain crosses the membrane as a helical span at residues 135 to 155 (YSFPVFNLADCFITLGVIILV).

It belongs to the peptidase A8 family.

It localises to the cell inner membrane. The enzyme catalyses Release of signal peptides from bacterial membrane prolipoproteins. Hydrolyzes -Xaa-Yaa-Zaa-|-(S,diacylglyceryl)Cys-, in which Xaa is hydrophobic (preferably Leu), and Yaa (Ala or Ser) and Zaa (Gly or Ala) have small, neutral side chains.. Its pathway is protein modification; lipoprotein biosynthesis (signal peptide cleavage). This protein specifically catalyzes the removal of signal peptides from prolipoproteins. The protein is Lipoprotein signal peptidase of Rickettsia bellii (strain OSU 85-389).